A 335-amino-acid chain; its full sequence is Anthranilate phosphoribosyltransferase (335 aa).

5-phospho-alpha-D-ribose 1-diphosphate is bound by residues G79, 82–83 (GD), T87, 89–92 (NIST), 107–115 (KHGSRSVSS), and S119. G79 is an anthranilate binding site. A Mg(2+)-binding site is contributed by S91. Position 165 (R165) interacts with anthranilate. Residues D223 and E224 each contribute to the Mg(2+) site.

This sequence belongs to the anthranilate phosphoribosyltransferase family. As to quaternary structure, homodimer. It depends on Mg(2+) as a cofactor.

The enzyme catalyses N-(5-phospho-beta-D-ribosyl)anthranilate + diphosphate = 5-phospho-alpha-D-ribose 1-diphosphate + anthranilate. The protein operates within amino-acid biosynthesis; L-tryptophan biosynthesis; L-tryptophan from chorismate: step 2/5. Functionally, catalyzes the transfer of the phosphoribosyl group of 5-phosphorylribose-1-pyrophosphate (PRPP) to anthranilate to yield N-(5'-phosphoribosyl)-anthranilate (PRA). In Helicobacter pylori (strain G27), this protein is Anthranilate phosphoribosyltransferase.